Here is a 196-residue protein sequence, read N- to C-terminus: Probable malonic semialdehyde reductase RutE (196 aa).

It belongs to the nitroreductase family. HadB/RutE subfamily. Requires FMN as cofactor.

The catalysed reaction is 3-hydroxypropanoate + NADP(+) = 3-oxopropanoate + NADPH + H(+). Functionally, may reduce toxic product malonic semialdehyde to 3-hydroxypropionic acid, which is excreted. This chain is Probable malonic semialdehyde reductase RutE, found in Escherichia coli O6:H1 (strain CFT073 / ATCC 700928 / UPEC).